A 218-amino-acid chain; its full sequence is GEM-like protein 6 (218 aa).

The region spanning 96 to 174 (KIYKRLFKVC…CKINGVNQSQ (79 aa)) is the GRAM domain.

The protein belongs to the GEM family.

The chain is GEM-like protein 6 from Arabidopsis thaliana (Mouse-ear cress).